The chain runs to 2104 residues: Myosin type-2 heavy chain 2 (2104 aa).

Residues 35–85 (DERTWIWIPDSKESFVKAWIVEDLGEKYRVKLERDGSERIVDGFDAEKVNP) form the Myosin N-terminal SH3-like domain. A Myosin motor domain is found at 89 to 767 (DMVDDMAALT…VLGSLEDRRN (679 aa)). Position 182–189 (182–189 (GESGAGKT)) interacts with ATP. The interval 646–660 (LSSLMHQLEATQPHF) is actin-binding. Positions 829-2104 (LGTTQTDEYL…RSNRSPSVLR (1276 aa)) form a coiled coil. Disordered regions lie at residues 1245–1278 (NRSV…DGNN) and 1398–1426 (MEFT…SKRS). The segment covering 1246–1259 (RSVTQHTLDGNSPH) has biased composition (polar residues). Residues 1261–1278 (SFEEKHSGDPLKRIDGNN) are compositionally biased toward basic and acidic residues. Residues 1409–1424 (SKISNLPSSQPGSPSK) are compositionally biased toward polar residues. Ser-1421 carries the phosphoserine modification.

Belongs to the TRAFAC class myosin-kinesin ATPase superfamily. Myosin family. As to quaternary structure, binds to cdc4 and rlc1.

Functionally, stabilizes the F-actin cables forming the F-actin ring that surrounds the nucleus during interphase. May work in conjunction with myo2. The sequence is that of Myosin type-2 heavy chain 2 (myo3) from Schizosaccharomyces pombe (strain 972 / ATCC 24843) (Fission yeast).